We begin with the raw amino-acid sequence, 347 residues long: Malate dehydrogenase, mitochondrial (347 aa).

A mitochondrion-targeting transit peptide spans 1–27; the sequence is MKASILRSVRSAVSRSSSSNRLLSRSF. NAD(+) contacts are provided by residues 41 to 47 and aspartate 67; that span reads GAAGGIG. Residues arginine 114 and arginine 120 each contribute to the substrate site. NAD(+) contacts are provided by residues asparagine 127 and 150-152; that span reads ISN. Substrate-binding residues include asparagine 152 and arginine 186. Histidine 210 acts as the Proton acceptor in catalysis. Methionine 261 is an NAD(+) binding site.

This sequence belongs to the LDH/MDH superfamily. MDH type 1 family. As to quaternary structure, homodimer.

The protein resides in the mitochondrion matrix. It carries out the reaction (S)-malate + NAD(+) = oxaloacetate + NADH + H(+). The polypeptide is Malate dehydrogenase, mitochondrial (MMDH) (Citrullus lanatus (Watermelon)).